We begin with the raw amino-acid sequence, 89 residues long: Cell division protein FtsL (89 aa).

Over 1 to 6 (MAMNKL) the chain is Cytoplasmic. A helical transmembrane segment spans residues 7 to 24 (NFLLLLAVCVSAFSVVMQ). Residues 25 to 89 (QNQYRLNFTA…GNTFMVEHQR (65 aa)) lie on the Periplasmic side of the membrane. The stretch at 33 to 73 (TALDKAKKQEIALEQDYAQMRLQQARLANHEAIRAAAEKQN) forms a coiled coil.

This sequence belongs to the FtsL family. Part of a complex composed of FtsB, FtsL and FtsQ.

It is found in the cell inner membrane. Essential cell division protein. May link together the upstream cell division proteins, which are predominantly cytoplasmic, with the downstream cell division proteins, which are predominantly periplasmic. This chain is Cell division protein FtsL, found in Neisseria meningitidis serogroup B (strain ATCC BAA-335 / MC58).